The sequence spans 341 residues: HTH-type transcriptional repressor PurR (341 aa).

The 55-residue stretch at 2–56 (ATIKDVAKRAGVSTTTVSHVINKTRFVADETREAVWVAIKELHYSPSAVARSLKV) folds into the HTH lacI-type domain. The H-T-H motif DNA-binding region spans 4-23 (IKDVAKRAGVSTTTVSHVIN). Residues 48 to 56 (SAVARSLKV) mediate DNA binding. The hypoxanthine site is built by Tyr73, Arg190, Thr192, Phe221, and Asp275.

In terms of assembly, homodimer.

The protein operates within purine metabolism; purine nucleotide biosynthesis [regulation]. Its function is as follows. Is the main repressor of the genes involved in the de novo synthesis of purine nucleotides, regulating purB, purC, purEK, purF, purHD, purL, purMN and guaBA expression. PurR is allosterically activated to bind its cognate DNA by binding the purine corepressors, hypoxanthine or guanine, thereby effecting transcription repression. In Erwinia tasmaniensis (strain DSM 17950 / CFBP 7177 / CIP 109463 / NCPPB 4357 / Et1/99), this protein is HTH-type transcriptional repressor PurR.